The chain runs to 387 residues: Mannitol-1-phosphate 5-dehydrogenase (387 aa).

Residue Ala3–Gly14 participates in NAD(+) binding.

It belongs to the mannitol dehydrogenase family.

The catalysed reaction is D-mannitol 1-phosphate + NAD(+) = beta-D-fructose 6-phosphate + NADH + H(+). The polypeptide is Mannitol-1-phosphate 5-dehydrogenase (Yersinia pseudotuberculosis serotype O:3 (strain YPIII)).